The sequence spans 291 residues: Methionine aminopeptidase (291 aa).

Position 118 (His-118) interacts with substrate. Asp-135, Asp-146, and His-209 together coordinate a divalent metal cation. His-216 is a binding site for substrate. Glu-241 and Glu-273 together coordinate a divalent metal cation.

Belongs to the peptidase M24A family. Methionine aminopeptidase type 1 subfamily. In terms of assembly, monomer. Co(2+) serves as cofactor. It depends on Zn(2+) as a cofactor. The cofactor is Mn(2+). Fe(2+) is required as a cofactor.

The catalysed reaction is Release of N-terminal amino acids, preferentially methionine, from peptides and arylamides.. Removes the N-terminal methionine from nascent proteins. The N-terminal methionine is often cleaved when the second residue in the primary sequence is small and uncharged (Met-Ala-, Cys, Gly, Pro, Ser, Thr, or Val). Requires deformylation of the N(alpha)-formylated initiator methionine before it can be hydrolyzed. This is Methionine aminopeptidase from Chlamydia pneumoniae (Chlamydophila pneumoniae).